The following is a 474-amino-acid chain: B-cell CLL/lymphoma 6 member B protein (474 aa).

In terms of domain architecture, BTB spans 38–105 (TDVTLLVGGQ…MYTSRLRLSP (68 aa)). Disordered regions lie at residues 144–190 (PVEV…PDPK) and 210–249 (GSLV…GLQS). Positions 150–160 (PRPPTVAPPGS) are enriched in pro residues. Positions 162–172 (RRSEGHPDPPT) are enriched in basic and acidic residues. Polar residues-rich tracts occupy residues 173–183 (ESRSCSQGSPS), 210–220 (GSLVGESSGQP), and 240–249 (EEGTTPGLQS). C2H2-type zinc fingers lie at residues 323–345 (YKCQ…RTVH), 351–373 (YRCS…SRIH), 379–401 (YKCE…VLIH), 407–429 (YPCP…VRIH), and 435–458 (YHCD…RQKH).

In terms of assembly, associates with BCL6 through the BTB domain. In terms of tissue distribution, ubiquitously expressed with higher expression found in heart and lung.

Its subcellular location is the nucleus. In terms of biological role, acts as a sequence-specific transcriptional repressor in association with BCL6. Necessary for activation of naive T-cells to antigenic stimulation. May attenuate the regulatory effect of BCL6 on antigenic activation of naive CD4 T-cells by forming a heterodimer with BCL6. This chain is B-cell CLL/lymphoma 6 member B protein (Bcl6b), found in Mus musculus (Mouse).